Consider the following 346-residue polypeptide: Dihydroorotase (346 aa).

Positions 13 and 15 each coordinate Zn(2+). Substrate-binding positions include 15–17 (HLR) and Asn41. Zn(2+) is bound by residues Lys99, His136, and His174. Position 99 is an N6-carboxylysine (Lys99). Substrate is bound at residue His136. Substrate is bound at residue Leu219. Asp247 contacts Zn(2+). Asp247 is a catalytic residue. Residues His251 and Ala263 each coordinate substrate.

Belongs to the metallo-dependent hydrolases superfamily. DHOase family. Class II DHOase subfamily. As to quaternary structure, homodimer. It depends on Zn(2+) as a cofactor.

The catalysed reaction is (S)-dihydroorotate + H2O = N-carbamoyl-L-aspartate + H(+). It functions in the pathway pyrimidine metabolism; UMP biosynthesis via de novo pathway; (S)-dihydroorotate from bicarbonate: step 3/3. Catalyzes the reversible cyclization of carbamoyl aspartate to dihydroorotate. The sequence is that of Dihydroorotase from Rhizobium leguminosarum bv. trifolii (strain WSM2304).